A 308-amino-acid polypeptide reads, in one-letter code: GTP cyclohydrolase MptA (308 aa).

Residues 282 to 308 form a disordered region; it reads NDESIHQHNAHAEREVTLGQLRDELDA.

It belongs to the GTP cyclohydrolase IV family. As to quaternary structure, homodimer. The cofactor is Fe(2+).

It carries out the reaction GTP + H2O = 7,8-dihydroneopterin 2',3'-cyclic phosphate + formate + diphosphate + H(+). The protein operates within cofactor biosynthesis; 5,6,7,8-tetrahydromethanopterin biosynthesis. Converts GTP to 7,8-dihydro-D-neopterin 2',3'-cyclic phosphate, the first intermediate in the biosynthesis of coenzyme methanopterin. Involved in archaeosine (G(+)) and folate biosynthesis. In Haloferax volcanii (strain ATCC 29605 / DSM 3757 / JCM 8879 / NBRC 14742 / NCIMB 2012 / VKM B-1768 / DS2) (Halobacterium volcanii), this protein is GTP cyclohydrolase MptA.